The chain runs to 237 residues: MVTVREEMRKGPWTEQEDLQLVCTVRLFGDRRWDFVAKVSGLNRTGKSCRLRWVNYLHPGLKHGRMSPKEEHLIIELHARWGNRWSRIARRLPGRTDNEIKNYWRTHMRKKAQERRGDMSPSSSSSSLVYQSCLLDTVPIISMDGGDIHDDRSCMARVLKSTQSVMDGYTMDQIWKEIEAPGAPSLLGIDEGKDKACSNLPCPLLTSTMSDYSCPEVFWKIDNEETRMLATQSGYGK.

HTH myb-type domains are found at residues 5-57 (REEM…VNYL) and 58-112 (HPGL…RKKA). Residues 33 to 57 (WDFVAKVSGLNRTGKSCRLRWVNYL) constitute a DNA-binding region (H-T-H motif). The Bipartite nuclear localization signal 1 signature appears at 62 to 65 (KHGR). The segment at residues 85–108 (WSRIARRLPGRTDNEIKNYWRTHM) is a DNA-binding region (H-T-H motif). The Bipartite nuclear localization signal 2 motif lies at 109-117 (RKKAQERRG).

The protein localises to the nucleus. Its function is as follows. Transcription factor. The sequence is that of Myb-related protein MYBAS1 (MYBAS1) from Oryza sativa subsp. japonica (Rice).